We begin with the raw amino-acid sequence, 200 residues long: Peptidyl-tRNA hydrolase (200 aa).

Tyr-16 lines the tRNA pocket. His-21 functions as the Proton acceptor in the catalytic mechanism. The tRNA site is built by Phe-67, Asn-69, and Asn-115.

The protein belongs to the PTH family. In terms of assembly, monomer.

The protein resides in the cytoplasm. The catalysed reaction is an N-acyl-L-alpha-aminoacyl-tRNA + H2O = an N-acyl-L-amino acid + a tRNA + H(+). In terms of biological role, hydrolyzes ribosome-free peptidyl-tRNAs (with 1 or more amino acids incorporated), which drop off the ribosome during protein synthesis, or as a result of ribosome stalling. Its function is as follows. Catalyzes the release of premature peptidyl moieties from peptidyl-tRNA molecules trapped in stalled 50S ribosomal subunits, and thus maintains levels of free tRNAs and 50S ribosomes. In Prochlorococcus marinus (strain AS9601), this protein is Peptidyl-tRNA hydrolase.